The following is a 134-amino-acid chain: Methylglyoxal synthase (134 aa).

Positions 1–134 (MVNLNIALIA…GLLEWRNAVK (134 aa)) constitute an MGS-like domain. Substrate is bound by residues H11, K15, and 37 to 40 (TGAT). Residue D63 is the Proton donor/acceptor of the active site. Position 90 (H90) interacts with substrate.

Belongs to the methylglyoxal synthase family.

It carries out the reaction dihydroxyacetone phosphate = methylglyoxal + phosphate. Catalyzes the formation of methylglyoxal from dihydroxyacetone phosphate. The chain is Methylglyoxal synthase from Thermoanaerobacterium thermosaccharolyticum (Clostridium thermosaccharolyticum).